Reading from the N-terminus, the 456-residue chain is Chitobiosyldiphosphodolichol beta-mannosyltransferase (456 aa).

The Lumenal portion of the chain corresponds to 1 to 22 (MGEIIKYKGFDHVWQYSGPWLY). Residues 23 to 43 (CLIGIYISLPVLAYHILPWIF) traverse the membrane as a helical segment. At 44–103 (HKNRSNKRKTISIFVLGDLGHSPRMCYHASSFSKLDYYVNLCGYVETEPSHQIVDDVNID) the chain is on the cytoplasmic side. Positions 104–124 (IIPIEAIKNTNNLPYIMFAIL) form an intramembrane region, helical. The Cytoplasmic portion of the chain corresponds to 125 to 456 (KVVRQCGKIW…TFSSIFENKS (332 aa)).

It belongs to the glycosyltransferase group 1 family.

Its subcellular location is the endoplasmic reticulum membrane. It carries out the reaction an N,N'-diacetylchitobiosyl-diphospho-di-trans,poly-cis-dolichol + GDP-alpha-D-mannose = a beta-D-Man-(1-&gt;4)-beta-D-GlcNAc-(1-&gt;4)-alpha-D-GlcNAc-diphospho-di-trans,poly-cis-dolichol + GDP + H(+). Its pathway is protein modification; protein glycosylation. Participates in the formation of the lipid-linked precursor oligosaccharide for N-glycosylation. Involved in assembling the dolichol-pyrophosphate-GlcNAc(2)-Man(5) intermediate on the cytoplasmic surface of the ER. The sequence is that of Chitobiosyldiphosphodolichol beta-mannosyltransferase (ALG1) from Candida albicans (strain SC5314 / ATCC MYA-2876) (Yeast).